The following is a 144-amino-acid chain: Snaclec coagulation factor IX/factor X-binding protein subunit B1 (144 aa).

A signal peptide spans 1–23; the sequence is MGRFIFVSFGLLVVFLSLSGTAA. Disulfide bonds link Cys25-Cys36, Cys53-Cys142, and Cys119-Cys134. Residues 32 to 143 form the C-type lectin domain; the sequence is YEGHCYKPFN…CRMMANFVCE (112 aa).

This sequence belongs to the snaclec family. In terms of assembly, heterodimer of subunits A and B1; disulfide-linked. In terms of tissue distribution, expressed by the venom gland.

It is found in the secreted. Functionally, anticoagulant protein which binds to the gamma-carboxyglutamic acid-domain regions of factors IX (F9) and factor X (F10) in the presence of calcium with a 1 to 1 stoichiometry. The chain is Snaclec coagulation factor IX/factor X-binding protein subunit B1 from Trimeresurus stejnegeri (Chinese green tree viper).